The sequence spans 366 residues: RNA 3'-terminal phosphate cyclase (366 aa).

The ATP site is built by glutamine 104, proline 131, tyrosine 294, aspartate 297, glutamine 298, and histidine 320. Histidine 320 (tele-AMP-histidine intermediate) is an active-site residue.

The protein belongs to the RNA 3'-terminal cyclase family. Type 1 subfamily. Detected in retinal ganglion cells (RGCs) (at protein level).

It localises to the nucleus. Its subcellular location is the nucleoplasm. It catalyses the reaction a 3'-end 3'-phospho-ribonucleotide-RNA + ATP = a 3'-end 2',3'-cyclophospho-ribonucleotide-RNA + AMP + diphosphate. Catalyzes the conversion of 3'-phosphate to a 2',3'-cyclic phosphodiester at the end of RNA. The mechanism of action of the enzyme occurs in 3 steps: (A) adenylation of the enzyme by ATP; (B) transfer of adenylate to an RNA-N3'P to produce RNA-N3'PP5'A; (C) and attack of the adjacent 2'-hydroxyl on the 3'-phosphorus in the diester linkage to produce the cyclic end product. Likely functions in some aspects of cellular RNA processing. Function plays an important role in regulating axon regeneration by inhibiting central nervous system (CNS) axon regeneration following optic nerve injury. In Mus musculus (Mouse), this protein is RNA 3'-terminal phosphate cyclase.